Here is a 316-residue protein sequence, read N- to C-terminus: Short-chain dehydrogenase/reductase family 16C member 6 (316 aa).

40–64 (LITGAASGLGRLLAIKFASLGAILV) serves as a coordination point for NAD(+). A substrate-binding site is contributed by Ser-173. Tyr-186 functions as the Proton acceptor in the catalytic mechanism.

Belongs to the short-chain dehydrogenases/reductases (SDR) family.

In Bos taurus (Bovine), this protein is Short-chain dehydrogenase/reductase family 16C member 6 (SDR16C6).